Here is a 206-residue protein sequence, read N- to C-terminus: MMTNWNFNKANKPLLLVVSGPSGVGKDAVLARMKERKLPLAYIVTTTTRTKREKETEGVDYNFIRPAEFQQLIGQNELLEWANVYGNFYGVPKAPIRQALAHGFDVIVKVDVQGAASIKKIVPNAVFIFLMPPDMDELTRRLEHRLTESPESLKRRLATAPLEIEKLPDFDYVVVNPEGEIDNAVSEIMSIISAEHCRINPRSIEL.

One can recognise a Guanylate kinase-like domain in the interval 13–193 (PLLLVVSGPS…AVSEIMSIIS (181 aa)). ATP is bound at residue 20–27 (GPSGVGKD).

Belongs to the guanylate kinase family.

The protein localises to the cytoplasm. The enzyme catalyses GMP + ATP = GDP + ADP. Its function is as follows. Essential for recycling GMP and indirectly, cGMP. The sequence is that of Guanylate kinase from Dehalococcoides mccartyi (strain ATCC BAA-2266 / KCTC 15142 / 195) (Dehalococcoides ethenogenes (strain 195)).